Reading from the N-terminus, the 68-residue chain is Small ribosomal subunit protein bS21 (68 aa).

The protein belongs to the bacterial ribosomal protein bS21 family.

The chain is Small ribosomal subunit protein bS21 from Endomicrobium trichonymphae.